A 290-amino-acid polypeptide reads, in one-letter code: 4-diphosphocytidyl-2-C-methyl-D-erythritol kinase (290 aa).

Lys13 is an active-site residue. 96–106 (PMGGGIGGGSS) is an ATP binding site. Residue Asp138 is part of the active site.

This sequence belongs to the GHMP kinase family. IspE subfamily.

It carries out the reaction 4-CDP-2-C-methyl-D-erythritol + ATP = 4-CDP-2-C-methyl-D-erythritol 2-phosphate + ADP + H(+). The protein operates within isoprenoid biosynthesis; isopentenyl diphosphate biosynthesis via DXP pathway; isopentenyl diphosphate from 1-deoxy-D-xylulose 5-phosphate: step 3/6. In terms of biological role, catalyzes the phosphorylation of the position 2 hydroxy group of 4-diphosphocytidyl-2C-methyl-D-erythritol. In Vibrio vulnificus (strain CMCP6), this protein is 4-diphosphocytidyl-2-C-methyl-D-erythritol kinase.